The following is a 540-amino-acid chain: Acrosin-binding protein (540 aa).

A signal peptide spans 1–24; that stretch reads MKLAASFLLMLLEVLLLPETPLSA. The tract at residues 25-104 is pro-ACR binding; sequence EEALASTPGS…ASWFESFCQF (80 aa). Residues 25–272 constitute a propeptide, removed in mature form; it reads EEALASTPGS…NPSFFTPRVR (248 aa). The segment at 181–266 is disordered; that stretch reads SLSLGGKEQQ…SKSLSSNPSF (86 aa). The span at 195-213 shows a compositional bias: basic and acidic residues; the sequence is LGLEQQHKQEQIQEHKLEE. The span at 214–241 shows a compositional bias: acidic residues; that stretch reads AQEQEEQEEEEEEEEAKQEEGQGTEEGL. Polar residues predominate over residues 256–266; it reads QSKSLSSNPSF. The interval 316–424 is pro-ACR binding; sequence LPHTETLMVL…NQAKIPEKGR (109 aa).

In terms of assembly, binds pro-ACR. Does not bind the mature form of ACR. Binds pro-ACR. Does not bind mature form of ACR. Post-translationally, the N-terminus is blocked. Phosphorylated on Tyr residues in capacitated sperm. In terms of processing, synthesized as a 60-kDa precursor, the 32-kDa mature form is post-translationally produced by the removal of the N-terminal half of the precursor during sperm maturation in the testis and/or epididymis.

The protein localises to the cytoplasmic vesicle. The protein resides in the secretory vesicle. It localises to the acrosome. Acrosomal protein that maintains proacrosin (pro-ACR) as an enzymatically inactive zymogen in the acrosome. Involved also in the acrosome formation. Its function is as follows. Maintains pro-ACR as an enzymatically inactive zymogen in the acrosome until acrosomal exocytosis. Partially also contributes to the assembly of acrosomal proteins to form an acrosomal granule. In terms of biological role, rodent specific isoform that participates in the formation of the acrosomal granule into the center of the acrosomal vesicle during early spermiogenesis. In the fertilization process promotes ACR release from the acrosome during acrosomal exocytosis. The chain is Acrosin-binding protein from Rattus norvegicus (Rat).